The following is a 229-amino-acid chain: DNA mismatch repair protein MutH (229 aa).

Belongs to the MutH family.

The protein resides in the cytoplasm. In terms of biological role, sequence-specific endonuclease that cleaves unmethylated GATC sequences. It is involved in DNA mismatch repair. The polypeptide is DNA mismatch repair protein MutH (Escherichia coli (strain K12 / MC4100 / BW2952)).